Consider the following 513-residue polypeptide: Sphingosine-1-phosphate transporter SPNS2 (513 aa).

11 consecutive transmembrane segments (helical) span residues 102 to 122 (GLLQTVFICSFMVAAPIFGYL), 130 to 150 (VILSSGIFFWSAITFSSSFIP), 163 to 183 (LVGIGEASYSTIAPTIIGDLF), 190 to 210 (LMLSVFYFAIPLGSGLGYITG), 222 to 242 (WALRVSPVLGVITGTLLLIFV), 276 to 296 (LATSTVSFATGALGMWIPLYL), 320 to 340 (LIFGAITCLTGFLGVIIGAGA), 354 to 374 (LVCAVGMLGSAIFICLVFVAA), 378 to 398 (IIAAYICIFAGETLLFSNWAI), 422 to 442 (TSHLLGDAGSPYLIGFISDLI), and 463 to 483 (LCPFVVVLGGMFFLATALFFL).

The protein belongs to the major facilitator superfamily. Spinster (TC 2.A.1.49) family.

The protein resides in the cell membrane. It localises to the endosome membrane. The enzyme catalyses sphing-4-enine 1-phosphate(in) = sphing-4-enine 1-phosphate(out). It catalyses the reaction sphinganine 1-phosphate(in) = sphinganine 1-phosphate(out). Its function is as follows. Lipid transporter that specifically mediates export of sphingosine-1-phosphate (sphing-4-enine 1-phosphate, S1P) and sphinganine-1-phosphate. This is Sphingosine-1-phosphate transporter SPNS2 (spns2) from Xenopus tropicalis (Western clawed frog).